Here is a 190-residue protein sequence, read N- to C-terminus: Outer-membrane lipoprotein LolB (190 aa).

Residues 1 to 16 (MRLRFSLLLTVSLLAG) form the signal peptide. Cys17 carries N-palmitoyl cysteine lipidation. A lipid anchor (S-diacylglycerol cysteine) is attached at Cys17.

The protein belongs to the LolB family. As to quaternary structure, monomer.

The protein resides in the cell outer membrane. In terms of biological role, plays a critical role in the incorporation of lipoproteins in the outer membrane after they are released by the LolA protein. The polypeptide is Outer-membrane lipoprotein LolB (Dechloromonas aromatica (strain RCB)).